We begin with the raw amino-acid sequence, 349 residues long: 5-deoxyribose 1-phosphate isomerase (349 aa).

Substrate-binding positions include 49-51 (RGA), arginine 92, and glutamine 199. The active-site Proton donor is the aspartate 240. 250–251 (NK) serves as a coordination point for substrate.

Belongs to the EIF-2B alpha/beta/delta subunits family. DrdI subfamily.

The enzyme catalyses 5-deoxy-alpha-D-ribose 1-phosphate = 5-deoxy-D-ribulose 1-phosphate. It participates in carbohydrate degradation. Functionally, catalyzes the isomerization of 5-deoxy-alpha-D-ribose 1-phosphate to 5-deoxy-D-ribulose 1-phosphate, as part of a 5-deoxyribose salvage pathway that recycles this toxic radical SAM enzyme by-product to mainstream metabolites. The polypeptide is 5-deoxyribose 1-phosphate isomerase (Clostridium botulinum (strain Loch Maree / Type A3)).